The sequence spans 322 residues: Ig gamma-2A chain C region (322 aa).

3 Ig-like domains span residues 6–98, 115–212, and 221–317; these read PSVY…KKIV, VFIF…KSIS, and PQVY…KSLS. Cystine bridges form between C27-C82, C136-C196, and C242-C300. An N-linked (GlcNAc...) asparagine glycan is attached at N172.

This chain is Ig gamma-2A chain C region (Igg-2a), found in Rattus norvegicus (Rat).